The chain runs to 456 residues: Cysteine--tRNA ligase (456 aa).

Cysteine 28 contacts Zn(2+). The 'HIGH' region signature appears at 30–40 (MTVYDYCHLGH). 3 residues coordinate Zn(2+): cysteine 209, histidine 234, and glutamate 238. Positions 266–270 (KMSKS) match the 'KMSKS' region motif. Lysine 269 contacts ATP.

The protein belongs to the class-I aminoacyl-tRNA synthetase family. Monomer. It depends on Zn(2+) as a cofactor.

The protein resides in the cytoplasm. It carries out the reaction tRNA(Cys) + L-cysteine + ATP = L-cysteinyl-tRNA(Cys) + AMP + diphosphate. The polypeptide is Cysteine--tRNA ligase (Dechloromonas aromatica (strain RCB)).